The following is a 503-amino-acid chain: Efflux pump vrtL (503 aa).

The segment at 1-59 (MSKLSDNHSSASEGEKEAGDLESGPTAISSEPSFDDADRDPNLITWDGPKDPENPKNWP) is disordered. An N-linked (GlcNAc...) asparagine glycan is attached at Asn7. A run of 12 helical transmembrane segments spans residues 68-88 (WTVS…APAM), 101-121 (IEIY…PIFF), 133-153 (LLQI…FATT), 162-182 (FLAG…ISDM), 194-214 (VYTL…GFIA), 221-241 (WVFW…FFWL), 295-315 (IVFC…LMFA), 329-349 (PGIG…GLFF), 377-397 (SLAV…WSIG), 401-421 (WIMP…CLQG), 432-454 (TYAA…GFPL), and 471-491 (LLAF…WHFG).

Belongs to the major facilitator superfamily.

The protein localises to the membrane. In terms of biological role, efflux pump; part of the gene cluster that mediates the biosynthesis of viridicatumtoxin, a tetracycline-like fungal meroterpenoid with a unique, fused spirobicyclic ring system. This is Efflux pump vrtL from Penicillium aethiopicum.